Here is a 483-residue protein sequence, read N- to C-terminus: Altronate oxidoreductase (483 aa).

18 to 29 (IIQFGEGNFLRA) contributes to the NAD(+) binding site.

The protein belongs to the mannitol dehydrogenase family. UxaB subfamily.

It carries out the reaction D-altronate + NAD(+) = keto-D-tagaturonate + NADH + H(+). Its pathway is carbohydrate metabolism; pentose and glucuronate interconversion. The sequence is that of Altronate oxidoreductase from Enterobacter sp. (strain 638).